A 382-amino-acid chain; its full sequence is MKALHFGAGNIGRGFIGKLLADAGIQLTFADVNQVVLDALNARHSYQVHVVGETEQVDTVSGVDAVSSIGDDVVDLIAQVDLVTTAVGPVVLERIAPAIAKGLVKRKEQGNESPLNIIACENMVRGTTQLKGHVMNALPEDAKAWVEEHVGFVDSAVDRIVPPSASATNDPLEVTVETFSEWIVDKTQFKGTLPNIPGMELTDNLMAFVERKLFTLNTGHAITAYLGKLAGHQTIRDAILDEKIRAVVKGAMEESGAVLIKRYDFDADKHAAYIQKILGRFENPYLKDDVERVGRQPLRKLSAGDRLIKPLLGTLEYGLPHKNLIEGIAAAMHFRSEDDPQAQELAALIADKGPQAALAQISGLDANSEVVSEAVTAYKAMQ.

Ala-3–Gly-14 provides a ligand contact to NAD(+). Position 269 is an N6-acetyllysine (Lys-269).

Belongs to the mannitol dehydrogenase family.

It catalyses the reaction D-mannitol 1-phosphate + NAD(+) = beta-D-fructose 6-phosphate + NADH + H(+). The chain is Mannitol-1-phosphate 5-dehydrogenase from Escherichia coli O45:K1 (strain S88 / ExPEC).